The sequence spans 324 residues: Mevalonate kinase (324 aa).

103–113 contacts ATP; that stretch reads PPRAGLGSSAA. Asp-154 (proton acceptor) is an active-site residue.

This sequence belongs to the GHMP kinase family. Mevalonate kinase subfamily. Homodimer. Requires Mg(2+) as cofactor.

It is found in the cytoplasm. It catalyses the reaction (R)-mevalonate + ATP = (R)-5-phosphomevalonate + ADP + H(+). The protein operates within isoprenoid biosynthesis; isopentenyl diphosphate biosynthesis via mevalonate pathway; isopentenyl diphosphate from (R)-mevalonate: step 1/3. Its function is as follows. Catalyzes the phosphorylation of (R)-mevalonate (MVA) to (R)-mevalonate 5-phosphate (MVAP). Functions in the mevalonate (MVA) pathway leading to isopentenyl diphosphate (IPP), a key precursor for the biosynthesis of isoprenoid compounds such as archaeal membrane lipids. In Aeropyrum pernix (strain ATCC 700893 / DSM 11879 / JCM 9820 / NBRC 100138 / K1), this protein is Mevalonate kinase.